A 212-amino-acid polypeptide reads, in one-letter code: Orotate phosphoribosyltransferase (212 aa).

5-phospho-alpha-D-ribose 1-diphosphate-binding positions include Arg-97, Lys-101, His-103, and 123–131 (EDLISTGGS). Residue Ser-127 coordinates orotate.

Belongs to the purine/pyrimidine phosphoribosyltransferase family. PyrE subfamily. Homodimer. Mg(2+) is required as a cofactor.

It carries out the reaction orotidine 5'-phosphate + diphosphate = orotate + 5-phospho-alpha-D-ribose 1-diphosphate. The protein operates within pyrimidine metabolism; UMP biosynthesis via de novo pathway; UMP from orotate: step 1/2. In terms of biological role, catalyzes the transfer of a ribosyl phosphate group from 5-phosphoribose 1-diphosphate to orotate, leading to the formation of orotidine monophosphate (OMP). The polypeptide is Orotate phosphoribosyltransferase (Phocaeicola vulgatus (strain ATCC 8482 / DSM 1447 / JCM 5826 / CCUG 4940 / NBRC 14291 / NCTC 11154) (Bacteroides vulgatus)).